The chain runs to 157 residues: 17.6 kDa class I heat shock protein 3 (157 aa).

Residues 43–157 (DVAAFTNAKV…PEVKSIDISG (115 aa)) form the sHSP domain.

The protein belongs to the small heat shock protein (HSP20) family. May form oligomeric structures.

It localises to the cytoplasm. The polypeptide is 17.6 kDa class I heat shock protein 3 (HSP17.6C) (Arabidopsis thaliana (Mouse-ear cress)).